Consider the following 154-residue polypeptide: Protein phosphatase 1 regulatory subunit 27 (154 aa).

ANK repeat units lie at residues 63–92 (SGLA…DIHQ) and 96–125 (TGWT…DRDA).

As to quaternary structure, interacts with DYSF and PPP1CA.

In terms of biological role, inhibits phosphatase activity of protein phosphatase 1 (PP1) complexes. The polypeptide is Protein phosphatase 1 regulatory subunit 27 (Ppp1r27) (Mus musculus (Mouse)).